A 434-amino-acid polypeptide reads, in one-letter code: Beta-enolase (434 aa).

An N-acetylalanine modification is found at Ala-2. Residue Thr-72 is modified to Phosphothreonine. Residues Ser-83 and Ser-157 each carry the phosphoserine modification. Residues His-158 and Glu-167 each coordinate substrate. Ser-176 is modified (phosphoserine). Position 205 is a phosphothreonine (Thr-205). The Proton donor role is filled by Glu-210. Phosphothreonine is present on Thr-229. At Tyr-236 the chain carries Phosphotyrosine. Asp-245 lines the Mg(2+) pocket. At Ser-263 the chain carries Phosphoserine. Residues Glu-293 and Asp-318 each contribute to the substrate site. Mg(2+)-binding residues include Glu-293 and Asp-318. The active-site Proton acceptor is the Lys-343. Substrate-binding positions include 370-373 (SHRS) and Lys-394.

The protein belongs to the enolase family. In terms of assembly, mammalian enolase is composed of 3 isozyme subunits, alpha, beta and gamma, which can form homodimers or heterodimers which are cell-type and development-specific. Interacts with PNKD. The cofactor is Mg(2+). In terms of tissue distribution, the alpha/alpha homodimer is expressed in embryo and in most adult tissues. The alpha/beta heterodimer and the beta/beta homodimer are found in striated muscle, and the alpha/gamma heterodimer and the gamma/gamma homodimer in neurons.

The protein resides in the cytoplasm. It catalyses the reaction (2R)-2-phosphoglycerate = phosphoenolpyruvate + H2O. It participates in carbohydrate degradation; glycolysis; pyruvate from D-glyceraldehyde 3-phosphate: step 4/5. Its function is as follows. Glycolytic enzyme that catalyzes the conversion of 2-phosphoglycerate to phosphoenolpyruvate. Appears to have a function in striated muscle development and regeneration. This chain is Beta-enolase (ENO3), found in Oryctolagus cuniculus (Rabbit).